A 225-amino-acid polypeptide reads, in one-letter code: NAD(P)H-quinone oxidoreductase subunit K, chloroplastic (225 aa).

4 residues coordinate [4Fe-4S] cluster: Cys-43, Cys-44, Cys-108, and Cys-139.

It belongs to the complex I 20 kDa subunit family. As to quaternary structure, NDH is composed of at least 16 different subunits, 5 of which are encoded in the nucleus. It depends on [4Fe-4S] cluster as a cofactor.

Its subcellular location is the plastid. It localises to the chloroplast thylakoid membrane. It catalyses the reaction a plastoquinone + NADH + (n+1) H(+)(in) = a plastoquinol + NAD(+) + n H(+)(out). The catalysed reaction is a plastoquinone + NADPH + (n+1) H(+)(in) = a plastoquinol + NADP(+) + n H(+)(out). In terms of biological role, NDH shuttles electrons from NAD(P)H:plastoquinone, via FMN and iron-sulfur (Fe-S) centers, to quinones in the photosynthetic chain and possibly in a chloroplast respiratory chain. The immediate electron acceptor for the enzyme in this species is believed to be plastoquinone. Couples the redox reaction to proton translocation, and thus conserves the redox energy in a proton gradient. This chain is NAD(P)H-quinone oxidoreductase subunit K, chloroplastic, found in Liriodendron tulipifera (Tuliptree).